A 234-amino-acid polypeptide reads, in one-letter code: Small ribosomal subunit protein uS2c (234 aa).

Belongs to the universal ribosomal protein uS2 family.

It localises to the plastid. The protein localises to the chloroplast. In Pinus koraiensis (Korean pine), this protein is Small ribosomal subunit protein uS2c (rps2).